A 77-amino-acid polypeptide reads, in one-letter code: Translation initiation factor IF-1, chloroplastic (77 aa).

One can recognise an S1-like domain in the interval 1 to 71; it reads MKEQKWIHEG…TRGRIIYRLR (71 aa).

This sequence belongs to the IF-1 family. In terms of assembly, component of the 30S ribosomal translation pre-initiation complex which assembles on the 30S ribosome in the order IF-2 and IF-3, IF-1 and N-formylmethionyl-tRNA(fMet); mRNA recruitment can occur at any time during PIC assembly.

The protein resides in the plastid. It is found in the chloroplast. One of the essential components for the initiation of protein synthesis. Stabilizes the binding of IF-2 and IF-3 on the 30S subunit to which N-formylmethionyl-tRNA(fMet) subsequently binds. Helps modulate mRNA selection, yielding the 30S pre-initiation complex (PIC). Upon addition of the 50S ribosomal subunit IF-1, IF-2 and IF-3 are released leaving the mature 70S translation initiation complex. The polypeptide is Translation initiation factor IF-1, chloroplastic (Hedera helix (English ivy)).